Here is a 494-residue protein sequence, read N- to C-terminus: Glucose-6-phosphate 1-dehydrogenase (494 aa).

Residues Arg46 and Lys150 each contribute to the NADP(+) site. Substrate is bound by residues His180, Lys184, Glu218, and Asp237. Catalysis depends on His242, which acts as the Proton acceptor. Lys342 provides a ligand contact to substrate.

Belongs to the glucose-6-phosphate dehydrogenase family.

The enzyme catalyses D-glucose 6-phosphate + NADP(+) = 6-phospho-D-glucono-1,5-lactone + NADPH + H(+). The protein operates within carbohydrate degradation; pentose phosphate pathway; D-ribulose 5-phosphate from D-glucose 6-phosphate (oxidative stage): step 1/3. In terms of biological role, catalyzes the oxidation of glucose 6-phosphate to 6-phosphogluconolactone. This Aggregatibacter actinomycetemcomitans (Actinobacillus actinomycetemcomitans) protein is Glucose-6-phosphate 1-dehydrogenase.